The following is a 375-amino-acid chain: Alcohol dehydrogenase 1 (375 aa).

Ser-1 bears the N-acetylserine mark. Residues Cys-46, His-67, Cys-97, Cys-100, Cys-103, Cys-111, and Cys-175 each contribute to the Zn(2+) site. Residues 200-205, Asp-224, Lys-229, 293-295, and Arg-370 contribute to the NAD(+) site; these read GLGGVG and VGV.

Belongs to the zinc-containing alcohol dehydrogenase family. Class-I subfamily. In terms of assembly, homodimer. Requires Zn(2+) as cofactor.

Its subcellular location is the cytoplasm. It catalyses the reaction a primary alcohol + NAD(+) = an aldehyde + NADH + H(+). It carries out the reaction a secondary alcohol + NAD(+) = a ketone + NADH + H(+). The polypeptide is Alcohol dehydrogenase 1 (ADH1) (Coturnix japonica (Japanese quail)).